The sequence spans 282 residues: Bifunctional protein FolD (282 aa).

NADP(+) contacts are provided by residues 162–164 (GRS), Ser-187, and Val-228.

The protein belongs to the tetrahydrofolate dehydrogenase/cyclohydrolase family. In terms of assembly, homodimer.

It carries out the reaction (6R)-5,10-methylene-5,6,7,8-tetrahydrofolate + NADP(+) = (6R)-5,10-methenyltetrahydrofolate + NADPH. It catalyses the reaction (6R)-5,10-methenyltetrahydrofolate + H2O = (6R)-10-formyltetrahydrofolate + H(+). It functions in the pathway one-carbon metabolism; tetrahydrofolate interconversion. In terms of biological role, catalyzes the oxidation of 5,10-methylenetetrahydrofolate to 5,10-methenyltetrahydrofolate and then the hydrolysis of 5,10-methenyltetrahydrofolate to 10-formyltetrahydrofolate. This Thermus thermophilus (strain ATCC BAA-163 / DSM 7039 / HB27) protein is Bifunctional protein FolD.